A 135-amino-acid chain; its full sequence is Ribonuclease P protein component (135 aa).

The protein belongs to the RnpA family. In terms of assembly, consists of a catalytic RNA component (M1 or rnpB) and a protein subunit.

It catalyses the reaction Endonucleolytic cleavage of RNA, removing 5'-extranucleotides from tRNA precursor.. In terms of biological role, RNaseP catalyzes the removal of the 5'-leader sequence from pre-tRNA to produce the mature 5'-terminus. It can also cleave other RNA substrates such as 4.5S RNA. The protein component plays an auxiliary but essential role in vivo by binding to the 5'-leader sequence and broadening the substrate specificity of the ribozyme. The polypeptide is Ribonuclease P protein component (Pseudomonas aeruginosa (strain ATCC 15692 / DSM 22644 / CIP 104116 / JCM 14847 / LMG 12228 / 1C / PRS 101 / PAO1)).